We begin with the raw amino-acid sequence, 501 residues long: WD repeat-containing protein wdr-5.3 (501 aa).

Disordered regions lie at residues 1–35 (MNPE…LESN), 58–85 (PIGV…YQSH), and 155–197 (KSAE…ITKK). Polar residues predominate over residues 22–35 (PNQQSLQSRMLESN). The segment covering 167–177 (SITTKPTSTIQ) has biased composition (polar residues). WD repeat units follow at residues 211–241 (GHTK…KVWN), 253–283 (SHQL…KIFD), 295–325 (GHTN…RVWD), 337–367 (AHSD…RVWD), 381–410 (DHAP…KLWD), 422–455 (GHKN…LVWS), and 467–499 (GHTT…RIWR).

This sequence belongs to the WD repeat WDR5/wds family.

In terms of biological role, not required for methylation of histone H3 'Lys-4'. In Caenorhabditis elegans, this protein is WD repeat-containing protein wdr-5.3 (wdr-5.3).